We begin with the raw amino-acid sequence, 181 residues long: Ribulose bisphosphate carboxylase small subunit, chloroplastic 2 (181 aa).

The N-terminal 57 residues, M1–Q57, are a transit peptide targeting the chloroplast.

This sequence belongs to the RuBisCO small chain family. As to quaternary structure, heterohexadecamer of 8 large and 8 small subunits.

It localises to the plastid. The protein resides in the chloroplast. RuBisCO catalyzes two reactions: the carboxylation of D-ribulose 1,5-bisphosphate, the primary event in carbon dioxide fixation, as well as the oxidative fragmentation of the pentose substrate. Both reactions occur simultaneously and in competition at the same active site. Although the small subunit is not catalytic it is essential for maximal activity. This Nicotiana sylvestris (Wood tobacco) protein is Ribulose bisphosphate carboxylase small subunit, chloroplastic 2.